A 450-amino-acid polypeptide reads, in one-letter code: MLAVAVLAAGKGTRMKSALPKVLQPLAGATLVERVLASAKNLQPERRLLIVGHQAERVEQTLEHVNGLEFVLQSPQNGTGHAVQQLLPVMEGFEGELLVLNGDVPLLRAATIDALVQGHRSSGADVTLLTARLADPTGYGRVFADTDGQVSNIIEHRDCSEEQRGNNLTNAGIYCFNWAALAEVLPQLSNDNDQGELYLTDTVAMLPRAMHLEVDDPDEVNGINNRKQLAQCEGVLQQRLRDYWMDEGVTFVDPASCTLSEDCRFGRDVVVEPQTHFRGCCSIGDNSKLGPGTLIDNASLGDRVEVVQSVVREAKVGDDVSIGPFAHLRPAADVGHGCRIGNFVEVKKSSLGAGSKVNHLSYIGDASLGENVNVGAGTITANYDGVNKHQTVIGDHSKTGANSVLVAPVTIGDHVTIGAGSTITKDVPSKALSIGRARQMTKDNWANRSI.

The interval 1 to 226 (MLAVAVLAAG…PDEVNGINNR (226 aa)) is pyrophosphorylase. Residues 7–10 (LAAG), lysine 21, glutamine 73, and 78–79 (GT) each bind UDP-N-acetyl-alpha-D-glucosamine. Aspartate 103 serves as a coordination point for Mg(2+). The UDP-N-acetyl-alpha-D-glucosamine site is built by glycine 140, glutamate 155, asparagine 170, and asparagine 224. Asparagine 224 contacts Mg(2+). Residues 227–247 (KQLAQCEGVLQQRLRDYWMDE) are linker. The tract at residues 248-450 (GVTFVDPASC…TKDNWANRSI (203 aa)) is N-acetyltransferase. Positions 329 and 347 each coordinate UDP-N-acetyl-alpha-D-glucosamine. Histidine 359 functions as the Proton acceptor in the catalytic mechanism. Tyrosine 362 and asparagine 373 together coordinate UDP-N-acetyl-alpha-D-glucosamine. Residues alanine 376, 382–383 (NY), alanine 419, and arginine 436 each bind acetyl-CoA.

The protein in the N-terminal section; belongs to the N-acetylglucosamine-1-phosphate uridyltransferase family. In the C-terminal section; belongs to the transferase hexapeptide repeat family. In terms of assembly, homotrimer. Mg(2+) is required as a cofactor.

It localises to the cytoplasm. The enzyme catalyses alpha-D-glucosamine 1-phosphate + acetyl-CoA = N-acetyl-alpha-D-glucosamine 1-phosphate + CoA + H(+). It carries out the reaction N-acetyl-alpha-D-glucosamine 1-phosphate + UTP + H(+) = UDP-N-acetyl-alpha-D-glucosamine + diphosphate. It functions in the pathway nucleotide-sugar biosynthesis; UDP-N-acetyl-alpha-D-glucosamine biosynthesis; N-acetyl-alpha-D-glucosamine 1-phosphate from alpha-D-glucosamine 6-phosphate (route II): step 2/2. Its pathway is nucleotide-sugar biosynthesis; UDP-N-acetyl-alpha-D-glucosamine biosynthesis; UDP-N-acetyl-alpha-D-glucosamine from N-acetyl-alpha-D-glucosamine 1-phosphate: step 1/1. It participates in bacterial outer membrane biogenesis; LPS lipid A biosynthesis. Catalyzes the last two sequential reactions in the de novo biosynthetic pathway for UDP-N-acetylglucosamine (UDP-GlcNAc). The C-terminal domain catalyzes the transfer of acetyl group from acetyl coenzyme A to glucosamine-1-phosphate (GlcN-1-P) to produce N-acetylglucosamine-1-phosphate (GlcNAc-1-P), which is converted into UDP-GlcNAc by the transfer of uridine 5-monophosphate (from uridine 5-triphosphate), a reaction catalyzed by the N-terminal domain. The chain is Bifunctional protein GlmU from Synechococcus sp. (strain CC9902).